A 476-amino-acid polypeptide reads, in one-letter code: Rho GTPase-activating protein 68F (476 aa).

2 disordered regions span residues 1 to 35 and 241 to 266; these read MDAH…DLHD and DKLN…QQQH. A phosphoserine mark is found at serine 29 and serine 31. The region spanning 91-244 is the CRAL-TRIO domain; that stretch reads SENFQTPRNK…NICDLDDKLN (154 aa). Threonine 251 carries the phosphothreonine modification. Polar residues predominate over residues 257–266; it reads NINASRQQQH. The region spanning 276–464 is the Rho-GAP domain; that stretch reads VPLKFIVMNS…FVLQNHKDIY (189 aa).

Its function is as follows. Functions as a GTPase-activating protein (GAP) for RhoA/Rho1 during gastrulation by converting it to an inactive GDP-bound state. In Drosophila melanogaster (Fruit fly), this protein is Rho GTPase-activating protein 68F (RhoGAP68F).